Here is a 346-residue protein sequence, read N- to C-terminus: Protein U59 (346 aa).

This sequence belongs to the herpesviridae U59/UL88 family.

In Elephantid herpesvirus 1 (isolate Asian elephant/Berlin/Kiba/1998) (EIHV-1), this protein is Protein U59.